Consider the following 102-residue polypeptide: Large ribosomal subunit protein bL21 (102 aa).

This sequence belongs to the bacterial ribosomal protein bL21 family. As to quaternary structure, part of the 50S ribosomal subunit. Contacts protein L20.

This protein binds to 23S rRNA in the presence of protein L20. The chain is Large ribosomal subunit protein bL21 from Syntrophotalea carbinolica (strain DSM 2380 / NBRC 103641 / GraBd1) (Pelobacter carbinolicus).